Reading from the N-terminus, the 85-residue chain is Phosphocarrier protein HPr (85 aa).

The HPr domain maps to 1 to 85 (MYEKQVEITA…HLVALMDQLH (85 aa)). The Pros-phosphohistidine intermediate role is filled by histidine 15.

The protein belongs to the HPr family.

It localises to the cytoplasm. Its function is as follows. General (non sugar-specific) component of the phosphoenolpyruvate-dependent sugar phosphotransferase system (sugar PTS). This major carbohydrate active-transport system catalyzes the phosphorylation of incoming sugar substrates concomitantly with their translocation across the cell membrane. The phosphoryl group from phosphoenolpyruvate (PEP) is transferred to the phosphoryl carrier protein HPr by enzyme I. Phospho-HPr then transfers it to the PTS EIIA domain. This is Phosphocarrier protein HPr (ptsH) from Vibrio cholerae serotype O1 (strain ATCC 39315 / El Tor Inaba N16961).